A 488-amino-acid polypeptide reads, in one-letter code: Solanidine UDP-glucose glucosyltransferase 1 (488 aa).

His23 functions as the Proton acceptor in the catalytic mechanism. His23 is an an anthocyanidin binding site. Asp127 (charge relay) is an active-site residue. 6 residues coordinate UDP-alpha-D-glucose: Val352, Gln354, His369, Asn373, Ser374, and Glu377. Ala392 provides a ligand contact to an anthocyanidin. Residues Asp393 and Gln394 each contribute to the UDP-alpha-D-glucose site.

The protein belongs to the UDP-glycosyltransferase family. As to expression, expressed in the shoot apical meristem (SAM) and tuber.

The catalysed reaction is solasodine + UDP-alpha-D-glucose = solasodine 3-beta-D-glucoside + UDP + H(+). The enzyme catalyses solanidine + UDP-alpha-D-glucose = solanidine 3-O-beta-D-glucopyranoside + UDP + H(+). It catalyses the reaction tomatidine + UDP-alpha-D-glucose = tomatidine 3-O-beta-D-glucopyranoside + UDP + H(+). Its function is as follows. Glucosyltransferase involved in the glucosylation of the steroidal alkaloid aglycons solanidine, solasodine and tomatidine to produce their corresponding glycoalkaloids. In Solanum tuberosum (Potato), this protein is Solanidine UDP-glucose glucosyltransferase 1.